A 492-amino-acid chain; its full sequence is Glutamyl-tRNA(Gln) amidotransferase subunit A (492 aa).

Active-site charge relay system residues include Lys79 and Ser154. The Acyl-ester intermediate role is filled by Ser178.

The protein belongs to the amidase family. GatA subfamily. As to quaternary structure, heterotrimer of A, B and C subunits.

The enzyme catalyses L-glutamyl-tRNA(Gln) + L-glutamine + ATP + H2O = L-glutaminyl-tRNA(Gln) + L-glutamate + ADP + phosphate + H(+). In terms of biological role, allows the formation of correctly charged Gln-tRNA(Gln) through the transamidation of misacylated Glu-tRNA(Gln) in organisms which lack glutaminyl-tRNA synthetase. The reaction takes place in the presence of glutamine and ATP through an activated gamma-phospho-Glu-tRNA(Gln). This chain is Glutamyl-tRNA(Gln) amidotransferase subunit A, found in Acinetobacter baumannii (strain ATCC 17978 / DSM 105126 / CIP 53.77 / LMG 1025 / NCDC KC755 / 5377).